The chain runs to 137 residues: Glycine cleavage system H protein (137 aa).

One can recognise a Lipoyl-binding domain in the interval 36-118; sequence PAIIGITEYA…YGEGWLLKVE (83 aa). Position 77 is an N6-lipoyllysine (Lys-77).

Belongs to the GcvH family. In terms of assembly, the glycine cleavage system is composed of four proteins: P, T, L and H. Requires (R)-lipoate as cofactor.

In terms of biological role, the glycine cleavage system catalyzes the degradation of glycine. The H protein shuttles the methylamine group of glycine from the P protein to the T protein. This is Glycine cleavage system H protein from Bifidobacterium longum (strain NCC 2705).